Consider the following 206-residue polypeptide: Peptidyl-tRNA hydrolase (206 aa).

Tyrosine 19 lines the tRNA pocket. The active-site Proton acceptor is the histidine 24. Residues phenylalanine 70, asparagine 72, and asparagine 118 each coordinate tRNA.

It belongs to the PTH family. Monomer.

Its subcellular location is the cytoplasm. The catalysed reaction is an N-acyl-L-alpha-aminoacyl-tRNA + H2O = an N-acyl-L-amino acid + a tRNA + H(+). Its function is as follows. Hydrolyzes ribosome-free peptidyl-tRNAs (with 1 or more amino acids incorporated), which drop off the ribosome during protein synthesis, or as a result of ribosome stalling. Functionally, catalyzes the release of premature peptidyl moieties from peptidyl-tRNA molecules trapped in stalled 50S ribosomal subunits, and thus maintains levels of free tRNAs and 50S ribosomes. The sequence is that of Peptidyl-tRNA hydrolase from Synechococcus sp. (strain CC9902).